Reading from the N-terminus, the 580-residue chain is Guanine nucleotide-binding protein alpha-4 subunit (580 aa).

Positions 1–10 are enriched in polar residues; it reads MSPSVSSPQL. The segment at 1 to 28 is disordered; it reads MSPSVSSPQLRHTKSNRAISRIDRTDPL. The G-alpha domain maps to 93-579; the sequence is RVYKMVLLGQ…RENLKLTGLV (487 aa). The interval 96–109 is G1 motif; sequence KMVLLGQAGAGKTT. 101-108 contributes to the GTP binding site; that stretch reads GQAGAGKT. Disordered regions lie at residues 160–196 and 302–325; these read KSSELSRLESSTSASTSTSASASSPKHVDTESQPNDA and GRAAAARRETDGGDSQSESEKDNS. The segment covering 167–183 has biased composition (low complexity); sequence LESSTSASTSTSASASS. Residues 387–395 form a G2 motif region; sequence DILHSRVRT. GTP is bound by residues 389–395, 415–419, 484–487, and Ala551; these read LHSRVRT, DVGGS, and NKID. Residue Thr395 coordinates Mg(2+). The G3 motif stretch occupies residues 411 to 420; sequence YRIYDVGGSR. The segment at 480–487 is G4 motif; sequence ILFLNKID. Residues 549-554 are G5 motif; the sequence is TVATST.

It belongs to the G-alpha family. As to quaternary structure, g proteins are composed of 3 units; alpha, beta and gamma. The alpha chain contains the guanine nucleotide binding site.

In terms of biological role, guanine nucleotide-binding proteins (G proteins) are involved as modulators or transducers in various transmembrane signaling systems. The polypeptide is Guanine nucleotide-binding protein alpha-4 subunit (GPA4) (Mycosarcoma maydis (Corn smut fungus)).